The primary structure comprises 660 residues: DNA ligase (660 aa).

NAD(+)-binding positions include 32–36, 81–82, and E112; these read DEVYD and SM. The active-site N6-AMP-lysine intermediate is K114. NAD(+) is bound by residues R135, E169, K284, and K308. Zn(2+) contacts are provided by C402, C405, C418, and C423. Residues 578-660 enclose the BRCT domain; sequence VENSPLAHKT…ELLKEAGIEA (83 aa).

This sequence belongs to the NAD-dependent DNA ligase family. LigA subfamily. The cofactor is Mg(2+). It depends on Mn(2+) as a cofactor.

The enzyme catalyses NAD(+) + (deoxyribonucleotide)n-3'-hydroxyl + 5'-phospho-(deoxyribonucleotide)m = (deoxyribonucleotide)n+m + AMP + beta-nicotinamide D-nucleotide.. DNA ligase that catalyzes the formation of phosphodiester linkages between 5'-phosphoryl and 3'-hydroxyl groups in double-stranded DNA using NAD as a coenzyme and as the energy source for the reaction. It is essential for DNA replication and repair of damaged DNA. In Nitratiruptor sp. (strain SB155-2), this protein is DNA ligase.